The sequence spans 438 residues: Thymidine phosphorylase (438 aa).

It belongs to the thymidine/pyrimidine-nucleoside phosphorylase family. In terms of assembly, homodimer.

The catalysed reaction is thymidine + phosphate = 2-deoxy-alpha-D-ribose 1-phosphate + thymine. Its pathway is pyrimidine metabolism; dTMP biosynthesis via salvage pathway; dTMP from thymine: step 1/2. Its function is as follows. The enzymes which catalyze the reversible phosphorolysis of pyrimidine nucleosides are involved in the degradation of these compounds and in their utilization as carbon and energy sources, or in the rescue of pyrimidine bases for nucleotide synthesis. This chain is Thymidine phosphorylase, found in Sinorhizobium medicae (strain WSM419) (Ensifer medicae).